Here is a 445-residue protein sequence, read N- to C-terminus: MLGNLGENLTKTMKKLVGISVIDKKTIEEVVKEIQRALIQSDVNIALVLDLSKKIKKRALEEEPPKGITPREHVITIIYEEMVNLLGGEAPGLDIDVKPYKILFLGLQGSGKTTTIGKLCRYLQKKGFNPAVVCTDTWRPAAYEQLRQLTEEMQVPLYGDPDNKDALDLAQKGLKEFKNRKVIIFDTAGRHKQEEDLIAEMDTLDDIIQPTESILVIDGTIGQQAGEQAKAFSQATDVGSIIITKLDGSAKGGGAMSAVAETGAPIKFIGTGERIDDFELFDPARFISRLLGMGDIQTLIEKAEDSIDEDMAEKTMKNMMSGKFTLVDMKNQFEMMNSMGPMQQVLSMIPGLGNKVSKEASKMTEDKIDGYKVIMSSMTKKEMENPKLIKQSRIRRIAMGAGVEESEVRDLLKYYNNTKKTMKGIGKRGRFGNNSMNRMMGQFMK.

Residues 106–113 (GLQGSGKT), 186–190 (DTAGR), and 244–247 (TKLD) each bind GTP.

The protein belongs to the GTP-binding SRP family. SRP54 subfamily. In terms of assembly, part of the signal recognition particle protein translocation system, which is composed of SRP and FtsY. Archaeal SRP consists of a 7S RNA molecule of 300 nucleotides and two protein subunits: SRP54 and SRP19.

It localises to the cytoplasm. It carries out the reaction GTP + H2O = GDP + phosphate + H(+). Functionally, involved in targeting and insertion of nascent membrane proteins into the cytoplasmic membrane. Binds to the hydrophobic signal sequence of the ribosome-nascent chain (RNC) as it emerges from the ribosomes. The SRP-RNC complex is then targeted to the cytoplasmic membrane where it interacts with the SRP receptor FtsY. This chain is Signal recognition particle 54 kDa protein, found in Methanobrevibacter smithii (strain ATCC 35061 / DSM 861 / OCM 144 / PS).